Reading from the N-terminus, the 189-residue chain is Putative nucleotidase BC_3386 (189 aa).

It belongs to the 5'(3')-deoxyribonucleotidase family.

This is Putative nucleotidase BC_3386 from Bacillus cereus (strain ATCC 14579 / DSM 31 / CCUG 7414 / JCM 2152 / NBRC 15305 / NCIMB 9373 / NCTC 2599 / NRRL B-3711).